A 565-amino-acid chain; its full sequence is MRCLQNSAKTLPLAFKSALLPLSQRWFCKFSPKPSSLTNIFKVSISTMANTLNGNVIMTSKPQSTYQVVVAATKEMGIGKDGKLPWNLPTDLKFFKDLTLSTSDSAKKNAVVMGRKTWESIPKKYRPLSGRLNVVLSRSSGFDIANTENVVTCSSIDSALDLLAAPPFSLSIEKVFVIGGGDILREALNKPSCEAIHITEIDTSIDCDTFIPTVDTSAYQPWCSSFPICENGLRFSFTTHVRVKSSSAGEASDESDGSKVLQVDWKKFSSVLPKMIFDRHEEYLYLNLVKEIISNGNLKDDRTGTGTLSKFGCQMKFNLRRNFPLLTTKRVFWRGVVEELLWFISGSTNAKVLQEKGIRIWDGNASRAYLDGIGLTEREEGDLGPVYGFQWRHFGAKYTDMHADYTGQGFDQLLDVINKIKNNPDDRRIIMSAWNPSDLKLMALPPCHMFAQFYVANGELSCQMYQRSADMGLGVPFNIASYSLLTCILAHVCDLVPGDFIHVIGDAHVYKNHVRPLQEQLENPPKPFPVLKINPEKKDIDSFVADDFELIGYDPHKKIDMKMAV.

Residues 65 to 242 (TYQVVVAATK…LRFSFTTHVR (178 aa)) enclose the DHFR domain. Residue Val69 participates in substrate binding. NADP(+) is bound by residues Ala71 and 77–83 (GIGKDGK). Residue Asp91 participates in substrate binding. NADP(+) is bound by residues 115 to 117 (RKT) and 136 to 139 (LSRS). Ile178 contacts substrate. Residue 179-186 (GGGDILRE) participates in NADP(+) binding. Thr199 lines the substrate pocket. Positions 245–280 (SSSAGEASDESDGSKVLQVDWKKFSSVLPKMIFDRH) are hinge. Residues 281 to 565 (EEYLYLNLVK…HKKIDMKMAV (285 aa)) form a thymidylate synthase region. Arg302 is a dUMP binding site. Cys447 is a catalytic residue. DUMP-binding positions include His448, 466-470 (QRSAD), Asn478, and 508-510 (HVY).

It in the N-terminal section; belongs to the dihydrofolate reductase family. This sequence in the C-terminal section; belongs to the thymidylate synthase family. Heterodimer or homodimer.

It catalyses the reaction (6S)-5,6,7,8-tetrahydrofolate + NADP(+) = 7,8-dihydrofolate + NADPH + H(+). The catalysed reaction is dUMP + (6R)-5,10-methylene-5,6,7,8-tetrahydrofolate = 7,8-dihydrofolate + dTMP. It functions in the pathway cofactor biosynthesis; tetrahydrofolate biosynthesis; 5,6,7,8-tetrahydrofolate from 7,8-dihydrofolate: step 1/1. In terms of biological role, bifunctional enzyme. Involved in de novo dTMP biosynthesis. Key enzyme in folate metabolism. Can play two different roles depending on the source of dihydrofolate: de novo synthesis of tetrahydrofolate or recycling of the dihydrofolate released as one of the end products of the TS catalyzed reaction. Catalyzes an essential reaction for de novo glycine and purine synthesis, DNA precursor synthesis, and for the conversion of dUMP to dTMP. This is Bifunctional dihydrofolate reductase-thymidylate synthase 2 (THY-2) from Arabidopsis thaliana (Mouse-ear cress).